Here is a 297-residue protein sequence, read N- to C-terminus: Calponin-1 (297 aa).

The Calponin-homology (CH) domain occupies 28-131; the sequence is HQREQELREW…STLLALASMA (104 aa). Calponin-like repeat units lie at residues 164 to 189, 204 to 229, and 243 to 268; these read IGLQ…RHLY, ISLQ…RQIF, and VSLQ…RQVY. A Phosphothreonine; by ROCK2 modification is found at T170. Residue S175 is modified to Phosphoserine; by ROCK2. Residues T180 and T184 each carry the phosphothreonine; by ROCK2 modification. T259 carries the post-translational modification Phosphothreonine; by ROCK2.

The protein belongs to the calponin family. Part of cGMP kinase signaling complex at least composed of ACTA2/alpha-actin, CNN1/calponin H1, PLN/phospholamban, PRKG1 and ITPR1.

Functionally, thin filament-associated protein that is implicated in the regulation and modulation of smooth muscle contraction. It is capable of binding to actin, calmodulin and tropomyosin. The interaction of calponin with actin inhibits the actomyosin Mg-ATPase activity. This Ovis aries (Sheep) protein is Calponin-1 (CNN1).